Consider the following 104-residue polypeptide: L-rhamnose mutarotase (104 aa).

Position 18 (Tyr-18) interacts with substrate. His-22 acts as the Proton donor in catalysis. Substrate contacts are provided by residues Tyr-41 and 76 to 77; that span reads WW.

It belongs to the rhamnose mutarotase family. Homodimer.

The protein resides in the cytoplasm. The enzyme catalyses alpha-L-rhamnose = beta-L-rhamnose. The protein operates within carbohydrate metabolism; L-rhamnose metabolism. Its function is as follows. Involved in the anomeric conversion of L-rhamnose. The sequence is that of L-rhamnose mutarotase from Salmonella newport (strain SL254).